The sequence spans 518 residues: Ankyrin repeat and SOCS box protein 3 (518 aa).

ANK repeat units follow at residues 9-38 (DTCS…SVDV), 42-71 (RGWM…SENY), 78-107 (EGFC…DPNA), 111-140 (EETT…NVNG), 145-174 (CGWN…NKEC), 178-207 (FGIT…NVNC), 211-240 (DKAT…DPDL), 246-275 (SWQL…RACD), 279-308 (NKVS…SPDA), 315-346 (GFSS…QINE), and 348-373 (HLAY…SLGP). Residues 441–504 (MLSARASNAW…HNYLLYEDVL (64 aa)) form the SOCS box domain.

Belongs to the ankyrin SOCS box (ASB) family. In terms of assembly, interacts with ELOB and TNFRSF1B.

It is found in the cytoplasm. It functions in the pathway protein modification; protein ubiquitination. Its function is as follows. Probable substrate-recognition component of a SCF-like ECS (Elongin-Cullin-SOCS-box protein) E3 ubiquitin-protein ligase complex which mediates the ubiquitination and subsequent proteasomal degradation of target proteins. Recognizes TNFRSF1B. Plays a role in the down-regulation of antiviral innate immunity by targeting MAVS for ubiquitin-proteasomal degradation. Also destabilizes TRAF6 by enhancing its 'Lys-48'-linked polyubiquitination. The polypeptide is Ankyrin repeat and SOCS box protein 3 (ASB3) (Homo sapiens (Human)).